The chain runs to 451 residues: MRECISIHVGQAGVQIGNACWELYCLEHGIQPSGQMPSDKAVGGKDDSFNTFFSETGSGKHVPRAVFVDLEPTVVDEIRTGLYRQLFHPEQLITGKEDAANNYARGHYTIGKEHIDLVLDRVRKLSDQCTGLQGFLIFHSFGGGTGSGFTSLLMERLSVDYGKKSKLEFSIYPAPQVATAVVEPYNSILTTHTTLEHSDCAFMVDNEAIYDICKRNLDIERPSYTNLNRLISQVVSSITASLRFDGALNVDLTEFQTNLVPYPRIHFPLVTYAPIISAEKAYHEQLAVAEVTSACFEPANQMVKCDPRHGKYMACCMLYRGDVVPKDVNAAIATIKTKRSIQFVDWCPTGFKVGINYQPPTVVPGGDLAKVQRAVCMLSNTTAVAEAWARLDHKFDLMYAKRAFVHWYVGEGMEEGEFSEAREDLAALEKDYEEVGLDTFEAEEEEGGDEY.

Residue Gln11 coordinates GTP. At Lys40 the chain carries N6-acetyllysine. Residues Glu71, Ser140, Gly144, Thr145, Thr179, Asn206, and Asn228 each contribute to the GTP site. Residue Glu71 coordinates Mg(2+). The active site involves Glu254.

This sequence belongs to the tubulin family. In terms of assembly, dimer of alpha and beta chains. A typical microtubule is a hollow water-filled tube with an outer diameter of 25 nm and an inner diameter of 15 nM. Alpha-beta heterodimers associate head-to-tail to form protofilaments running lengthwise along the microtubule wall with the beta-tubulin subunit facing the microtubule plus end conferring a structural polarity. Microtubules usually have 13 protofilaments but different protofilament numbers can be found in some organisms and specialized cells. Requires Mg(2+) as cofactor. Undergoes a tyrosination/detyrosination cycle, the cyclic removal and re-addition of a C-terminal tyrosine residue by the enzymes tubulin tyrosine carboxypeptidase (TTCP) and tubulin tyrosine ligase (TTL), respectively. Post-translationally, acetylation of alpha chains at Lys-40 stabilizes microtubules and affects affinity and processivity of microtubule motors. This modification has a role in multiple cellular functions, ranging from cell motility, cell cycle progression or cell differentiation to intracellular trafficking and signaling. Actively expressed in the lens but does not seem to be lens-specific.

Its subcellular location is the cytoplasm. It is found in the cytoskeleton. It carries out the reaction GTP + H2O = GDP + phosphate + H(+). In terms of biological role, tubulin is the major constituent of microtubules, a cylinder consisting of laterally associated linear protofilaments composed of alpha- and beta-tubulin heterodimers. Microtubules grow by the addition of GTP-tubulin dimers to the microtubule end, where a stabilizing cap forms. Below the cap, tubulin dimers are in GDP-bound state, owing to GTPase activity of alpha-tubulin. This Enteroctopus dofleini (North Pacific giant octopus) protein is Tubulin alpha chain.